A 325-amino-acid polypeptide reads, in one-letter code: MGANAGRRSRSPERLRLPVCFLGVFACYFYYGILQESITRGKYGDGARQEKFTFALSLVFIQCVINAAFAKLLIRFFDSVRADRTHSWLYAACSLSYLGAMVSSNSALQFVNYPTQVLGKSCKPIPVMLLGVTVLRKKYPLAKYLCVLLIVTGVALFMYKPKKGAGGDDHIFGYGELLLLLSLTLDGLTGVSQDHMRAHYQTGSNHMMLNVNLWSTLFLGAGILFTGELWEFLSFTERYPSIIYNILLFGLTSALGQSFIFMTVVYFGPLTCSIITTTRKFFTILASVILFANPISTMQWVGTVLVFLGLGLDAKFGKGVKKTSH.

The next 8 membrane-spanning stretches (helical) occupy residues 18-38 (PVCFLGVFACYFYYGILQESI), 54-74 (FALSLVFIQCVINAAFAKLLI), 88-108 (WLYAACSLSYLGAMVSSNSAL), 139-159 (YPLAKYLCVLLIVTGVALFMY), 171-191 (IFGYGELLLLLSLTLDGLTGV), 213-233 (LWSTLFLGAGILFTGELWEFL), 246-266 (ILLFGLTSALGQSFIFMTVVY), and 288-308 (VILFANPISTMQWVGTVLVFL). The Di-lysine motif signature appears at 321–325 (KKTSH).

Belongs to the nucleotide-sugar transporter family. SLC35B subfamily.

The protein resides in the endoplasmic reticulum membrane. In terms of biological role, probable sugar transporter. This Gallus gallus (Chicken) protein is Solute carrier family 35 member B1 (SLC35B1).